The sequence spans 251 residues: Triosephosphate isomerase (251 aa).

9-11 (NWK) lines the substrate pocket. The active-site Electrophile is the His95. Glu167 acts as the Proton acceptor in catalysis. Residues Gly173, Ser212, and 233–234 (GG) each bind substrate.

The protein belongs to the triosephosphate isomerase family. In terms of assembly, homodimer.

It is found in the cytoplasm. It catalyses the reaction D-glyceraldehyde 3-phosphate = dihydroxyacetone phosphate. It participates in carbohydrate biosynthesis; gluconeogenesis. It functions in the pathway carbohydrate degradation; glycolysis; D-glyceraldehyde 3-phosphate from glycerone phosphate: step 1/1. Its function is as follows. Involved in the gluconeogenesis. Catalyzes stereospecifically the conversion of dihydroxyacetone phosphate (DHAP) to D-glyceraldehyde-3-phosphate (G3P). The protein is Triosephosphate isomerase of Pseudomonas syringae pv. syringae (strain B728a).